A 105-amino-acid chain; its full sequence is Pyrimidine/purine nucleoside phosphorylase (105 aa).

This sequence belongs to the nucleoside phosphorylase PpnP family.

The catalysed reaction is a purine D-ribonucleoside + phosphate = a purine nucleobase + alpha-D-ribose 1-phosphate. It catalyses the reaction adenosine + phosphate = alpha-D-ribose 1-phosphate + adenine. It carries out the reaction cytidine + phosphate = cytosine + alpha-D-ribose 1-phosphate. The enzyme catalyses guanosine + phosphate = alpha-D-ribose 1-phosphate + guanine. The catalysed reaction is inosine + phosphate = alpha-D-ribose 1-phosphate + hypoxanthine. It catalyses the reaction thymidine + phosphate = 2-deoxy-alpha-D-ribose 1-phosphate + thymine. It carries out the reaction uridine + phosphate = alpha-D-ribose 1-phosphate + uracil. The enzyme catalyses xanthosine + phosphate = alpha-D-ribose 1-phosphate + xanthine. Functionally, catalyzes the phosphorolysis of diverse nucleosides, yielding D-ribose 1-phosphate and the respective free bases. Can use uridine, adenosine, guanosine, cytidine, thymidine, inosine and xanthosine as substrates. Also catalyzes the reverse reactions. The sequence is that of Pyrimidine/purine nucleoside phosphorylase from Ralstonia nicotianae (strain ATCC BAA-1114 / GMI1000) (Ralstonia solanacearum).